The chain runs to 512 residues: NADH-quinone oxidoreductase subunit N (512 aa).

14 helical membrane passes run 32–52 (VLPA…SVLF), 57–77 (FIIV…AVFY), 97–117 (VLSF…AAIV), 126–146 (IEFP…TLMT), 151–171 (FILV…LIGM), 186–206 (FLLG…LFGG), 231–251 (IGLV…PYHA), 264–284 (VTGY…LILY), 296–316 (WAWL…LLAL), 324–344 (MLAY…SAGI), 348–368 (VLFY…ILAY), 392–412 (AIAI…GGFW), 431–451 (ILLI…LRIG), and 473–493 (VGVT…WFLL).

The protein belongs to the complex I subunit 2 family. NDH-1 is composed of 14 different subunits. Subunits NuoA, H, J, K, L, M, N constitute the membrane sector of the complex.

Its subcellular location is the cell inner membrane. It carries out the reaction a quinone + NADH + 5 H(+)(in) = a quinol + NAD(+) + 4 H(+)(out). NDH-1 shuttles electrons from NADH, via FMN and iron-sulfur (Fe-S) centers, to quinones in the respiratory chain. The immediate electron acceptor for the enzyme in this species is believed to be ubiquinone. Couples the redox reaction to proton translocation (for every two electrons transferred, four hydrogen ions are translocated across the cytoplasmic membrane), and thus conserves the redox energy in a proton gradient. In Leptospira interrogans serogroup Icterohaemorrhagiae serovar Lai (strain 56601), this protein is NADH-quinone oxidoreductase subunit N.